A 200-amino-acid chain; its full sequence is ATP-dependent Clp protease proteolytic subunit 2 (200 aa).

The active-site Nucleophile is the serine 101. Histidine 126 is an active-site residue.

This sequence belongs to the peptidase S14 family. In terms of assembly, fourteen ClpP subunits assemble into 2 heptameric rings which stack back to back to give a disk-like structure with a central cavity, resembling the structure of eukaryotic proteasomes.

Its subcellular location is the cytoplasm. It catalyses the reaction Hydrolysis of proteins to small peptides in the presence of ATP and magnesium. alpha-casein is the usual test substrate. In the absence of ATP, only oligopeptides shorter than five residues are hydrolyzed (such as succinyl-Leu-Tyr-|-NHMec, and Leu-Tyr-Leu-|-Tyr-Trp, in which cleavage of the -Tyr-|-Leu- and -Tyr-|-Trp bonds also occurs).. Its function is as follows. Cleaves peptides in various proteins in a process that requires ATP hydrolysis. Has a chymotrypsin-like activity. Plays a major role in the degradation of misfolded proteins. The sequence is that of ATP-dependent Clp protease proteolytic subunit 2 from Prochlorococcus marinus (strain MIT 9313).